The primary structure comprises 215 residues: Probable nicotinate-nucleotide adenylyltransferase (215 aa).

Belongs to the NadD family.

The enzyme catalyses nicotinate beta-D-ribonucleotide + ATP + H(+) = deamido-NAD(+) + diphosphate. It functions in the pathway cofactor biosynthesis; NAD(+) biosynthesis; deamido-NAD(+) from nicotinate D-ribonucleotide: step 1/1. Catalyzes the reversible adenylation of nicotinate mononucleotide (NaMN) to nicotinic acid adenine dinucleotide (NaAD). This is Probable nicotinate-nucleotide adenylyltransferase from Shewanella putrefaciens (strain CN-32 / ATCC BAA-453).